Here is a 287-residue protein sequence, read N- to C-terminus: ATP synthase gamma chain (287 aa).

This sequence belongs to the ATPase gamma chain family. F-type ATPases have 2 components, CF(1) - the catalytic core - and CF(0) - the membrane proton channel. CF(1) has five subunits: alpha(3), beta(3), gamma(1), delta(1), epsilon(1). CF(0) has three main subunits: a, b and c.

It localises to the cell inner membrane. Functionally, produces ATP from ADP in the presence of a proton gradient across the membrane. The gamma chain is believed to be important in regulating ATPase activity and the flow of protons through the CF(0) complex. This chain is ATP synthase gamma chain, found in Tolumonas auensis (strain DSM 9187 / NBRC 110442 / TA 4).